We begin with the raw amino-acid sequence, 559 residues long: MRFLSLAPDRPRRGGPRHLPSGSPAPPPPPPLLLLLLLGGCLGVSGAAKGSRRPNVVLVLADDQDEVLGGMTPLKKTKALIGEMGMTFSSAYVPSALCCPSRASILTGKYPHNHHVVNNTLEGNCSSKSWQKIQEPNTFPAILRSMCGYQTFFAGKYLNEYGAPDAGGLGHVPLGWSYWYALEKNSKYYNYTLSINGKARKHGENYSVDYLTDVLANVSLDFLDYKSNSEPFFMMISTPAPHSPWTAAPQYQNAFQNVFAPRNKNFNIHGTNKHWLIRQAKTPMTNSSIQFLDNAFRERWQTLLSVDDLVEKLVKRLEFNGELNNTYIFYTSDNGYHTGQFSLPIDKRQLYEFDIKVPLLVRGPGIKPNQTSKMLVANIDLGPTILDIAGYGLNKTQMDGMSFLPILRGASNLTWRSDVLVEYQGEGRNVTDPTCPSLSPGVSQCFPDCVCEDAYNNTYACVRTMSELWNLQYCEFDDQEVFVEVYNLTADPHQLNNIAKSIDPELLGKMNYRLMMLQSCSGPTCRTPRVFDPGYRFDPRLMFSNHGSVRTRRFSKHLL.

Positions 1 to 26 (MRFLSLAPDRPRRGGPRHLPSGSPAP) are disordered. The signal sequence occupies residues 1-47 (MRFLSLAPDRPRRGGPRHLPSGSPAPPPPPPLLLLLLLGGCLGVSGA). 3 residues coordinate Ca(2+): Asp62, Asp63, and Cys98. Cys98 (nucleophile) is an active-site residue. At Cys98 the chain carries 3-oxoalanine (Cys). Residues Asn118, Asn124, Asn190, Asn205, Asn217, Asn286, and Asn324 are each glycosylated (N-linked (GlcNAc...) asparagine). Ca(2+) is bound by residues Asp333 and Asn334. 6 N-linked (GlcNAc...) asparagine glycosylation sites follow: Asn369, Asn394, Asn412, Asn429, Asn456, and Asn487. Residue Ser548 is modified to Phosphoserine.

Belongs to the sulfatase family. It depends on Ca(2+) as a cofactor. Post-translationally, processed by internal peptidase. In terms of processing, the conversion to 3-oxoalanine (also known as C-formylglycine, FGly), of a serine or cysteine residue in prokaryotes and of a cysteine residue in eukaryotes, is critical for catalytic activity.

Its subcellular location is the lysosome. The enzyme catalyses Hydrolysis of the 6-sulfate groups of the N-acetyl-D-glucosamine 6-sulfate units of heparan sulfate and keratan sulfate.. Its function is as follows. Hydrolyzes 6-sulfate groups in N-acetyl-d-glucosaminide units of heparin sulfate and keratan sulfate. This Capra hircus (Goat) protein is N-acetylglucosamine-6-sulfatase (GNS).